The primary structure comprises 248 residues: tRNA1(Val) (adenine(37)-N6)-methyltransferase (248 aa).

Belongs to the methyltransferase superfamily. tRNA (adenine-N(6)-)-methyltransferase family.

The protein localises to the cytoplasm. It catalyses the reaction adenosine(37) in tRNA1(Val) + S-adenosyl-L-methionine = N(6)-methyladenosine(37) in tRNA1(Val) + S-adenosyl-L-homocysteine + H(+). Specifically methylates the adenine in position 37 of tRNA(1)(Val) (anticodon cmo5UAC). This is tRNA1(Val) (adenine(37)-N6)-methyltransferase from Musicola paradisiaca (strain Ech703) (Dickeya paradisiaca).